The following is a 357-amino-acid chain: MQNTAPVPTTTTASKMQPFNNSLFGSFDDPILNARAAQVALADIDVKNVPQLTNPLMRPHDMFSYSNYFSGIHDTSAATNIYQGLPSSSEPFDASVVVPTSSDDQMTPLQQVMAMQQSYGAPPPFQYNMTHPFSTTSIASSNNLARYPIAPPTSDMDTDPRQLETFAEHFKQRRIKLGVTQADVGKALAHLKMPGVGSLSQSTICRFESLTLSHNNMVALKPILHSWLEKAEEAMKQKDTIGDINGILPNTDKKRKRTSIAAPEKRELEQFFKQQPRPSGERIASIADRLDLKKNVVRVWFCNQRQKQKRDFRSQFRARSAAAVMGPRVMPVLNGNNSNNNLKQGQTTYNGLPGFFD.

The POU-IV box signature appears at 35-44 (RAAQVALADI). One can recognise a POU-specific domain in the interval 155–232 (DMDTDPRQLE…ILHSWLEKAE (78 aa)). The homeobox DNA-binding region spans 253–312 (KKRKRTSIAAPEKRELEQFFKQQPRPSGERIASIADRLDLKKNVVRVWFCNQRQKQKRDF).

Belongs to the POU transcription factor family. Class-4 subfamily. In terms of assembly, interacts with mec-3; the heterooligomer binds to the promoters of mec-3, mec-4 and mec-7. Specific to neurons and neuroblasts. Expressed in CEM head neurons and in IL2, URA, URB, URX and URY neurons. Not expressed in olfactory sensory neurons but expressed in AIZ interneurons.

The protein localises to the nucleus. Functionally, transcription factor required for correct cell fate determination and differentiation in diverse neuronal cell lineages where it plays a role in specifying the fate of daughter cells during cell divisions. Involved in sensory neuron production and function. Binds both alone and with mec-3 to the mec-3 promoter to initiate and maintain mec-3 expression which is required for sensory neuron differentiation. In addition, binds both alone and with mec-3 to the promoters of mec-4 and mec-7 which act to regulate sensory neuron function. Involved in determining the identity of the serotonergic NSM neurons and the cholinergic IL2 sensory and URA motor neurons. Promotes expression of the cfi-1 transcription factor in the URA and IL2 neurons which in turn activates normal URA and IL2 gene expression. Required to determine the identity of BDU sensory neurons in concert with transcription factor unc-86, regulating expression of a number of genes, including transcription factors ceh-14 and ahr-1, neuropeptides flp-10, nlp-1 and nlp-15, and tyramine receptor-encoding ser-2. Regulates expression of a number of genes in NSM neurons including bas-1, cat-1, dop-3, mgl-3, nlp-13, scd-2 and ptps-1. In the IL2 neurons, required for expression of cho-1, gcy-19, klp-6, lag-2, unc-5 and unc-17. Promotes expression of pkd-2 in the male-specific CEM head neurons. Required for dauer-specific branching of IL2Q neurons and nictation behavior. Controls both the timing and direction of axon outgrowth in HSN neurons. Plays a role in serotonin production by regulating expression of the tryptophan hydrolase tph-1 which catalyzes serotonin synthesis, in the AIM, NSM, HSN and RIH neurons. Involved in regulation of lin-11 expression in the AIZ interneurons, the major interneurons of the olfactory pathway, and is required for odortaxis behavior. Involved in neurite pruning between AIM neurons during larval development by regulating the expression of transcription factor mbr-1. Required for correct localization of unc-40. The chain is Transcription factor unc-86 (unc-86) from Caenorhabditis elegans.